A 123-amino-acid chain; its full sequence is Small ribosomal subunit protein uS13 (123 aa).

Positions 97–123 (PVRGQKTKTNARTRKGPKKTVGRKKKK) are disordered. Over residues 101–123 (QKTKTNARTRKGPKKTVGRKKKK) the composition is skewed to basic residues.

It belongs to the universal ribosomal protein uS13 family. As to quaternary structure, part of the 30S ribosomal subunit. Forms a loose heterodimer with protein S19. Forms two bridges to the 50S subunit in the 70S ribosome.

In terms of biological role, located at the top of the head of the 30S subunit, it contacts several helices of the 16S rRNA. In the 70S ribosome it contacts the 23S rRNA (bridge B1a) and protein L5 of the 50S subunit (bridge B1b), connecting the 2 subunits; these bridges are implicated in subunit movement. Contacts the tRNAs in the A and P-sites. The chain is Small ribosomal subunit protein uS13 from Alkaliphilus oremlandii (strain OhILAs) (Clostridium oremlandii (strain OhILAs)).